Consider the following 469-residue polypeptide: 6-phosphofructo-2-kinase/fructose-2,6-bisphosphatase 4 (469 aa).

The 6-phosphofructo-2-kinase stretch occupies residues 1–249; the sequence is MASPRELTQN…YYLMNIHVTP (249 aa). 46-54 is an ATP binding site; the sequence is GLPARGKTY. Beta-D-fructose 6-phosphate contacts are provided by arginine 79 and arginine 103. Aspartate 129 is a catalytic residue. The beta-D-fructose 6-phosphate site is built by threonine 131 and arginine 137. Cysteine 159 is a catalytic residue. Position 168–173 (168–173) interacts with ATP; it reads NIVQVK. Residues lysine 173, arginine 194, and tyrosine 198 each coordinate beta-D-fructose 6-phosphate. The segment at 250–469 is fructose-2,6-bisphosphatase; the sequence is RSIYLCRHGE…EALVTVPAHQ (220 aa). Arginine 256 provides a ligand contact to beta-D-fructose 2,6-bisphosphate. Histidine 257 (tele-phosphohistidine intermediate) is an active-site residue. Asparagine 263, glycine 269, and arginine 306 together coordinate beta-D-fructose 2,6-bisphosphate. The active-site Proton donor/acceptor is glutamate 326. Beta-D-fructose 2,6-bisphosphate-binding residues include tyrosine 337, arginine 351, lysine 355, tyrosine 366, glutamine 392, and arginine 396. ATP is bound at residue 348–351; it reads FALR. ATP contacts are provided by residues 392–396 and tyrosine 428; that span reads QAVMR. Residue threonine 444 is modified to Phosphothreonine; by PKC.

It in the C-terminal section; belongs to the phosphoglycerate mutase family. As to quaternary structure, homodimer.

The catalysed reaction is beta-D-fructose 2,6-bisphosphate + H2O = beta-D-fructose 6-phosphate + phosphate. The enzyme catalyses beta-D-fructose 6-phosphate + ATP = beta-D-fructose 2,6-bisphosphate + ADP + H(+). With respect to regulation, the most important regulatory mechanism of these opposing activities is by phosphorylation and dephosphorylation of the enzyme. In terms of biological role, synthesis and degradation of fructose 2,6-bisphosphate. In Homo sapiens (Human), this protein is 6-phosphofructo-2-kinase/fructose-2,6-bisphosphatase 4 (PFKFB4).